Consider the following 422-residue polypeptide: Validoxylamine A glucosyltransferase (422 aa).

The protein belongs to the glycosyltransferase 2 family. It depends on Mn(2+) as a cofactor.

The catalysed reaction is validoxylamine A + UDP-alpha-D-glucose = validamycin A + UDP + H(+). Involved in the biosynthesis of the antifungal agent validamycin A. Catalyzes the final attachment of glucose from UDP-alpha-D-glucose to validoxylamine A to yield validamycin A. UDP-glucose is the most efficient glycosyl donor, whereas GDP-glucose and ADP-glucose are much less efficient. ValG also utilizes UDP-galactose as substrate to produce the new validamycin analog, 4''-epi-validamycin A. The sequence is that of Validoxylamine A glucosyltransferase from Streptomyces hygroscopicus subsp. jinggangensis (strain 5008).